The chain runs to 450 residues: Phosphoglucosamine mutase (450 aa).

The active-site Phosphoserine intermediate is serine 101. Serine 101, aspartate 240, aspartate 242, and aspartate 244 together coordinate Mg(2+). Position 101 is a phosphoserine (serine 101).

The protein belongs to the phosphohexose mutase family. The cofactor is Mg(2+). In terms of processing, activated by phosphorylation.

The enzyme catalyses alpha-D-glucosamine 1-phosphate = D-glucosamine 6-phosphate. Its function is as follows. Catalyzes the conversion of glucosamine-6-phosphate to glucosamine-1-phosphate. This chain is Phosphoglucosamine mutase, found in Streptococcus uberis (strain ATCC BAA-854 / 0140J).